Reading from the N-terminus, the 121-residue chain is UPF0145 protein SAV_4658 (121 aa).

The protein belongs to the UPF0145 family.

The polypeptide is UPF0145 protein SAV_4658 (Streptomyces avermitilis (strain ATCC 31267 / DSM 46492 / JCM 5070 / NBRC 14893 / NCIMB 12804 / NRRL 8165 / MA-4680)).